Reading from the N-terminus, the 304-residue chain is D-alanine--D-alanine ligase (304 aa).

Positions 103–299 (KLIWQALGLP…FADLCIEILK (197 aa)) constitute an ATP-grasp domain. 129–184 (EEKLGLPMFVKPAAEGSSVGVVKVKGKGRLKSVYEELKHLQGEIIAERFIGGGEYS) serves as a coordination point for ATP. D253, E266, and N268 together coordinate Mg(2+).

The protein belongs to the D-alanine--D-alanine ligase family. The cofactor is Mg(2+). Mn(2+) is required as a cofactor.

It localises to the cytoplasm. The catalysed reaction is 2 D-alanine + ATP = D-alanyl-D-alanine + ADP + phosphate + H(+). The protein operates within cell wall biogenesis; peptidoglycan biosynthesis. In terms of biological role, cell wall formation. The chain is D-alanine--D-alanine ligase from Neisseria meningitidis serogroup C / serotype 2a (strain ATCC 700532 / DSM 15464 / FAM18).